A 417-amino-acid chain; its full sequence is Delta-aminolevulinic acid dehydratase, chloroplastic (417 aa).

The N-terminal 40 residues, 1 to 40, are a transit peptide targeting the chloroplast; sequence MAALLVPGGGAAPGLVWRRRRAAVQCAAASPSSPDPSWRT. The disordered stretch occupies residues 63-92; it reads VVSGNPPAAPAAPAKAKAPPGTPVVKPLRL. Residue Lys286 is the Schiff-base intermediate with substrate of the active site. Positions 296 and 308 each coordinate 5-aminolevulinate. Position 324 (Glu324) interacts with Mg(2+). Catalysis depends on Lys339, which acts as the Schiff-base intermediate with substrate. The 5-aminolevulinate site is built by Ser365 and Tyr404.

The protein belongs to the ALAD family. In terms of assembly, homooctamer. Mg(2+) serves as cofactor.

Its subcellular location is the plastid. The protein localises to the chloroplast. The catalysed reaction is 2 5-aminolevulinate = porphobilinogen + 2 H2O + H(+). Its pathway is porphyrin-containing compound metabolism; protoporphyrin-IX biosynthesis; coproporphyrinogen-III from 5-aminolevulinate: step 1/4. Functionally, catalyzes an early step in the biosynthesis of tetrapyrroles. Binds two molecules of 5-aminolevulinate per subunit, each at a distinct site, and catalyzes their condensation to form porphobilinogen. The polypeptide is Delta-aminolevulinic acid dehydratase, chloroplastic (HEMB) (Selaginella martensii (Martens's spike moss)).